Reading from the N-terminus, the 597-residue chain is MEKPALEVQLKTLPNSPGVYQYFDKNGKILYVGKAKNLKKRVTSYFNKNHDSHRIGVMVKKICEIKHIVVASETDALLLENNLIKKHQPRFNVMLKDDKTYPWICIKNERFPRVFPTRRLIKDGSEYYGPFTSFKTVNTLLDLIKGLYKLRTCNYDLAEDKIRNGKYKVCLEYHLGNCLGPCEGFQPEEEYNNNIEAIRQIVKGNFKDSLQRFRNQMKQHSEKMEFEDAQRIKNKIDVLENYQAKSTVVNPRINNVDVFSVVSDEGYGYVNFLQLSHGAIIRSHTIEMKKKLDESDRELLELAIVEIRQRFSSNSTEIYVPFKVDVGEELKIVIPKLGDKKKIVELSQRNAKYFRQERFKQMKIVDPDRHVNRVMAQMKEDLRLGKEPRHIECFDNSNIQGTNPVAACVVFKNGKPSKKDYRKFNIKTVEGPDDFASMEEVVFRRYRRLLNEGEDLPELIIVDGGKGQLSSGVKALETLGLRGKIAIIGIAKRLEEIFYPEDSIPLYLDKKSETLKIIQQLRNEAHRFGITFHRNKRSKTALNTELESIQGIGEKTVVELLTHFRSLKRIKEASQKELADVVGSAKAAIICNFYHSE.

Residues 15–93 enclose the GIY-YIG domain; it reads NSPGVYQYFD…IKKHQPRFNV (79 aa). The UVR domain occupies 207–242; sequence KDSLQRFRNQMKQHSEKMEFEDAQRIKNKIDVLENY.

This sequence belongs to the UvrC family. Interacts with UvrB in an incision complex.

It localises to the cytoplasm. The UvrABC repair system catalyzes the recognition and processing of DNA lesions. UvrC both incises the 5' and 3' sides of the lesion. The N-terminal half is responsible for the 3' incision and the C-terminal half is responsible for the 5' incision. The protein is UvrABC system protein C of Christiangramia forsetii (strain DSM 17595 / CGMCC 1.15422 / KT0803) (Gramella forsetii).